We begin with the raw amino-acid sequence, 329 residues long: Cytoplasmic phosphatidylinositol transfer protein 1 (329 aa).

The interval 267–329 (SHGGYSSAPS…GNKPSLAKPE (63 aa)) is disordered.

This sequence belongs to the PtdIns transfer protein family. PI transfer class IIB subfamily.

It is found in the cytoplasm. The enzyme catalyses a 1,2-diacyl-sn-glycero-3-phospho-(1D-myo-inositol)(in) = a 1,2-diacyl-sn-glycero-3-phospho-(1D-myo-inositol)(out). It carries out the reaction a 1,2-diacyl-sn-glycero-3-phosphate(in) = a 1,2-diacyl-sn-glycero-3-phosphate(out). In terms of biological role, catalyzes the transfer of phosphatidylinositol (PI) and phosphatidic acid (PA) between membranes. Binds PA derived from the phospholipase D signaling pathway and among the cellular PA species, preferably binds to the C16:0/16:1 and C16:1/18:1 PA species. In Xenopus tropicalis (Western clawed frog), this protein is Cytoplasmic phosphatidylinositol transfer protein 1 (pitpnc1).